The primary structure comprises 219 residues: Protein GrpE (219 aa).

Disordered regions lie at residues 1-32 and 59-87; these read MSTT…LDAT and FDGV…AERT.

The protein belongs to the GrpE family. As to quaternary structure, homodimer.

It is found in the cytoplasm. Participates actively in the response to hyperosmotic and heat shock by preventing the aggregation of stress-denatured proteins, in association with DnaK and GrpE. It is the nucleotide exchange factor for DnaK and may function as a thermosensor. Unfolded proteins bind initially to DnaJ; upon interaction with the DnaJ-bound protein, DnaK hydrolyzes its bound ATP, resulting in the formation of a stable complex. GrpE releases ADP from DnaK; ATP binding to DnaK triggers the release of the substrate protein, thus completing the reaction cycle. Several rounds of ATP-dependent interactions between DnaJ, DnaK and GrpE are required for fully efficient folding. This is Protein GrpE from Corynebacterium diphtheriae (strain ATCC 700971 / NCTC 13129 / Biotype gravis).